Consider the following 244-residue polypeptide: Octanoyltransferase (244 aa).

The disordered stretch occupies residues 1–21; it reads MDKKLHSVSPESGPNSNLDLT. A compositionally biased stretch (polar residues) spans 9–21; the sequence is SPESGPNSNLDLT. The BPL/LPL catalytic domain occupies 59 to 244; sequence PFSPQAVWLL…LNWEKINQSL (186 aa). Substrate is bound by residues 101 to 108, 168 to 170, and 181 to 183; these read RGGEVTHH, SIG, and GFS. The Acyl-thioester intermediate role is filled by Cys-199.

The protein belongs to the LipB family.

Its subcellular location is the cytoplasm. It catalyses the reaction octanoyl-[ACP] + L-lysyl-[protein] = N(6)-octanoyl-L-lysyl-[protein] + holo-[ACP] + H(+). The protein operates within protein modification; protein lipoylation via endogenous pathway; protein N(6)-(lipoyl)lysine from octanoyl-[acyl-carrier-protein]: step 1/2. Catalyzes the transfer of endogenously produced octanoic acid from octanoyl-acyl-carrier-protein onto the lipoyl domains of lipoate-dependent enzymes. Lipoyl-ACP can also act as a substrate although octanoyl-ACP is likely to be the physiological substrate. This Prochlorococcus marinus (strain NATL1A) protein is Octanoyltransferase.